Reading from the N-terminus, the 364-residue chain is Uroporphyrinogen decarboxylase (364 aa).

Substrate contacts are provided by residues 28–32 (RQAGR), Asp-78, Tyr-160, Thr-215, and His-333.

The protein belongs to the uroporphyrinogen decarboxylase family. As to quaternary structure, homodimer.

It is found in the cytoplasm. The catalysed reaction is uroporphyrinogen III + 4 H(+) = coproporphyrinogen III + 4 CO2. The protein operates within porphyrin-containing compound metabolism; protoporphyrin-IX biosynthesis; coproporphyrinogen-III from 5-aminolevulinate: step 4/4. Catalyzes the decarboxylation of four acetate groups of uroporphyrinogen-III to yield coproporphyrinogen-III. The chain is Uroporphyrinogen decarboxylase from Burkholderia pseudomallei (strain 1106a).